Consider the following 178-residue polypeptide: Large ribosomal subunit protein uL6c (178 aa).

The protein belongs to the universal ribosomal protein uL6 family. As to quaternary structure, part of the 50S ribosomal subunit.

It localises to the plastid. It is found in the chloroplast. Binds 23S rRNA. The chain is Large ribosomal subunit protein uL6c (rpl6) from Phaeodactylum tricornutum (strain CCAP 1055/1).